Reading from the N-terminus, the 293-residue chain is N(1)-aminopropylagmatine ureohydrolase (293 aa).

The Mn(2+) site is built by His105, Asp128, His130, Asp132, Asp210, and Asp212.

The protein belongs to the arginase family. It depends on Mn(2+) as a cofactor.

Its subcellular location is the cytoplasm. It carries out the reaction N(1)-(3-aminopropyl)agmatine + H2O = urea + spermidine. Its pathway is amine and polyamine biosynthesis; spermidine biosynthesis. Involved in the biosynthesis of polyamines which are thought to support the growth of thermophilic microorganisms under high-temperature conditions. It seems that long-chain and branched-chain of polyamines effectively stabilize DNA and RNA, respectively. Catalyzes the decarboxylation of N1-(3-aminopropyl)agmatine to yield spermidine and urea. It cannot use agmatine as substrate. The sequence is that of N(1)-aminopropylagmatine ureohydrolase from Thermus thermophilus (strain ATCC 27634 / DSM 579 / HB8).